A 465-amino-acid polypeptide reads, in one-letter code: Uronate isomerase (465 aa).

Belongs to the metallo-dependent hydrolases superfamily. Uronate isomerase family.

It carries out the reaction D-glucuronate = D-fructuronate. It catalyses the reaction aldehydo-D-galacturonate = keto-D-tagaturonate. It functions in the pathway carbohydrate metabolism; pentose and glucuronate interconversion. This is Uronate isomerase from Streptococcus equi subsp. zooepidemicus (strain H70).